The primary structure comprises 134 residues: Putative pre-16S rRNA nuclease (134 aa).

Belongs to the YqgF nuclease family.

It localises to the cytoplasm. In terms of biological role, could be a nuclease involved in processing of the 5'-end of pre-16S rRNA. This chain is Putative pre-16S rRNA nuclease, found in Helicobacter pylori (strain P12).